Here is a 236-residue protein sequence, read N- to C-terminus: Small ribosomal subunit protein uS10m (236 aa).

The transit peptide at 1–24 directs the protein to the mitochondrion; it reads MMRQSIRPLRAFSSEVSWIARRTQ. The tract at residues 29-49 is disordered; the sequence is KPGDLVPNKPEPSKNEQEPRF. A compositionally biased stretch (basic and acidic residues) spans 39–49; the sequence is EPSKNEQEPRF.

This sequence belongs to the universal ribosomal protein uS10 family. In terms of assembly, part of the mitochondrial small ribosomal subunit.

Its subcellular location is the mitochondrion. Its function is as follows. Involved in mitochondrial genome encoded proteins translation. Involved in the binding of tRNA to the ribosomes. The polypeptide is Small ribosomal subunit protein uS10m (RSM10) (Gibberella zeae (strain ATCC MYA-4620 / CBS 123657 / FGSC 9075 / NRRL 31084 / PH-1) (Wheat head blight fungus)).